A 449-amino-acid polypeptide reads, in one-letter code: Probable multidrug resistance protein NorM (449 aa).

Transmembrane regions (helical) follow at residues 17–39, 54–76, 97–119, 129–151, 164–186, 196–215, 243–265, 280–302, 315–337, 352–369, 390–412, and 417–439; these read LMWP…TIMA, VGLW…PLVA, VAVS…LPIL, AGLF…ALRG, VISL…GIGP, GFAT…SYIY, LGLP…AIVL, MSVT…IRVG, LVQK…LIWF, VFDI…YQLM, MWIT…ARVA, and AGVW…MRLY.

The protein belongs to the multi antimicrobial extrusion (MATE) (TC 2.A.66.1) family.

It is found in the cell inner membrane. In terms of biological role, multidrug efflux pump. This is Probable multidrug resistance protein NorM (norM) from Acinetobacter baylyi (strain ATCC 33305 / BD413 / ADP1).